The primary structure comprises 135 residues: Large-conductance mechanosensitive channel (135 aa).

2 helical membrane-spanning segments follow: residues 10–30 (FAMRGNVIDMAVGVVIGGAFG) and 76–96 (GSFIQTMVDFLIIAFCIFCVI).

It belongs to the MscL family. In terms of assembly, homopentamer.

Its subcellular location is the cell inner membrane. Channel that opens in response to stretch forces in the membrane lipid bilayer. May participate in the regulation of osmotic pressure changes within the cell. The sequence is that of Large-conductance mechanosensitive channel from Campylobacter concisus (strain 13826).